The following is a 389-amino-acid chain: MSHRKFEHPRHGSLGFLPRKRSSRHRGKVKSFPKDDVSKPCHLTSFVGYKAGMTHIVREVEKPGSKLHKKETCEAVTIIETPPLVIVGLVAYVKTPRGLRSLNSVWAQHLSEEVRRRFYKNWCKSKKKAFTKYALKYDSDAGKKEIQMQLEKMKKYASIVRVIAHTQIRKMKGLKQKKAHLMEIQINGGTIADKVDYGYKFFEKEIPVDAVFQKDEMIDIIGVTKGKGYEGVVTRWGVTRLPRKTHRGLRKVACIGAWHPARVSYTVARAGQNGYHHRTEMNKKVYKIGKSGQESHAACTEFDRTEKDITPMGGFPHYGVVKGDYLMIKGCCVGPKKRVVTLRQSLLKQTSRLALEEIKLKFIDTSSKFGHGRFQTTDEKQRFFGKLKA.

Residues 1-36 (MSHRKFEHPRHGSLGFLPRKRSSRHRGKVKSFPKDD) are disordered. Positions 18-31 (PRKRSSRHRGKVKS) are enriched in basic residues.

It belongs to the universal ribosomal protein uL3 family.

Its subcellular location is the cytoplasm. Functionally, the L3 protein is a component of the large subunit of cytoplasmic ribosomes. This Oryza sativa subsp. japonica (Rice) protein is Large ribosomal subunit protein uL3 (RPL3).